We begin with the raw amino-acid sequence, 83 residues long: Small ribosomal subunit protein bS20 (83 aa).

This sequence belongs to the bacterial ribosomal protein bS20 family.

In terms of biological role, binds directly to 16S ribosomal RNA. The protein is Small ribosomal subunit protein bS20 of Flavobacterium psychrophilum (strain ATCC 49511 / DSM 21280 / CIP 103535 / JIP02/86).